The chain runs to 510 residues: Abscisic acid 8'-hydroxylase 2 (510 aa).

A helical transmembrane segment spans residues phenylalanine 3–leucine 23. Residue cysteine 441 coordinates heme.

It belongs to the cytochrome P450 family. The cofactor is heme.

It localises to the membrane. The catalysed reaction is 2-cis-(+)-abscisate + reduced [NADPH--hemoprotein reductase] + O2 = (+)-8'-hydroxyabscisate + oxidized [NADPH--hemoprotein reductase] + H2O + H(+). The protein operates within plant hormone degradation; abscisic acid degradation. Involved in the oxidative degradation of abscisic acid. The protein is Abscisic acid 8'-hydroxylase 2 (CYP707A6) of Oryza sativa subsp. japonica (Rice).